A 336-amino-acid polypeptide reads, in one-letter code: Cycloartenol-C-24-methyltransferase (336 aa).

Methionine 1 carries the post-translational modification N-acetylmethionine.

This sequence belongs to the class I-like SAM-binding methyltransferase superfamily. Erg6/SMT family. In terms of tissue distribution, highly expressed in vascular tissue, mature leaves and in regions undergoing cellular expansion.

It carries out the reaction cycloartenol + S-adenosyl-L-methionine = 24-methylenecycloartanol + S-adenosyl-L-homocysteine + H(+). It participates in steroid biosynthesis; sterol biosynthesis. Catalyzes the methyl transfer from S-adenosyl-methionine to the C-24 of cycloartenol to form 24-methylene cycloartenol. This chain is Cycloartenol-C-24-methyltransferase (SMT1), found in Arabidopsis thaliana (Mouse-ear cress).